Reading from the N-terminus, the 372-residue chain is Chaperone protein DnaJ (372 aa).

The 65-residue stretch at 5–69 (DYYEVLGVSK…DKRKQYDQFG (65 aa)) folds into the J domain. Residues 139–221 (GVDKIIELDL…CKGKGKYLER (83 aa)) form a CR-type zinc finger. Residues C152, C155, C169, C172, C195, C198, C209, and C212 each coordinate Zn(2+). CXXCXGXG motif repeat units lie at residues 152–159 (CSACFGSG), 169–176 (CNNCHGTG), 195–202 (CNVCNGAG), and 209–216 (CKNCKGKG).

This sequence belongs to the DnaJ family. Homodimer. Zn(2+) is required as a cofactor.

The protein resides in the cytoplasm. Functionally, participates actively in the response to hyperosmotic and heat shock by preventing the aggregation of stress-denatured proteins and by disaggregating proteins, also in an autonomous, DnaK-independent fashion. Unfolded proteins bind initially to DnaJ; upon interaction with the DnaJ-bound protein, DnaK hydrolyzes its bound ATP, resulting in the formation of a stable complex. GrpE releases ADP from DnaK; ATP binding to DnaK triggers the release of the substrate protein, thus completing the reaction cycle. Several rounds of ATP-dependent interactions between DnaJ, DnaK and GrpE are required for fully efficient folding. Also involved, together with DnaK and GrpE, in the DNA replication of plasmids through activation of initiation proteins. The chain is Chaperone protein DnaJ from Mycoplasma capricolum subsp. capricolum (strain California kid / ATCC 27343 / NCTC 10154).